Consider the following 217-residue polypeptide: Small ribosomal subunit protein uS3 (217 aa).

Residues 38 to 106 (IRKYIEQRLA…RVHINIIEIK (69 aa)) form the KH type-2 domain.

It belongs to the universal ribosomal protein uS3 family. In terms of assembly, part of the 30S ribosomal subunit. Forms a tight complex with proteins S10 and S14.

Binds the lower part of the 30S subunit head. Binds mRNA in the 70S ribosome, positioning it for translation. The sequence is that of Small ribosomal subunit protein uS3 from Lactiplantibacillus plantarum (strain ATCC BAA-793 / NCIMB 8826 / WCFS1) (Lactobacillus plantarum).